Here is a 339-residue protein sequence, read N- to C-terminus: ADP,ATP carrier protein (339 aa).

Solcar repeat units lie at residues methionine 39 to leucine 133, arginine 145 to valine 234, and alanine 246 to phenylalanine 328. The next 5 membrane-spanning stretches (helical) occupy residues phenylalanine 41–glutamine 70, leucine 110–phenylalanine 134, tryptophan 144–isoleucine 164, valine 212–lysine 232, and phenylalanine 245–phenylalanine 265. 2 residues coordinate ADP: arginine 115 and lysine 127. Arginine 269 lines the ADP pocket. Positions arginine 269 to methionine 274 are important for transport activity. The short motif at arginine 269–methionine 274 is the Nucleotide carrier signature motif element. The chain crosses the membrane as a helical span at residues alanine 305 to tyrosine 322.

Belongs to the mitochondrial carrier (TC 2.A.29) family. Monomer.

It is found in the mitochondrion inner membrane. The enzyme catalyses ADP(in) + ATP(out) = ADP(out) + ATP(in). With respect to regulation, the matrix-open state (m-state) is inhibited by the membrane-permeable bongkrekic acid (BKA). The cytoplasmic-open state (c-state) is inhibited by the membrane-impermeable toxic inhibitor carboxyatractyloside (CATR). Its function is as follows. ADP:ATP antiporter that mediates import of ADP into the mitochondrial matrix for ATP synthesis, and export of ATP out to fuel the cell. Cycles between the cytoplasmic-open state (c-state) and the matrix-open state (m-state): operates by the alternating access mechanism with a single substrate-binding site intermittently exposed to either the cytosolic (c-state) or matrix (m-state) side of the inner mitochondrial membrane. This chain is ADP,ATP carrier protein, found in Parachlorella kessleri (Green alga).